The primary structure comprises 428 residues: GTPase Obg (428 aa).

The Obg domain maps to 1 to 158 (MFVDQVKVYV…RYIVLELKVL (158 aa)). Residues 117–143 (ARGGRGGRGNSRFATPANPAPQLSENG) form a disordered region. The OBG-type G domain maps to 159–329 (ADVGLVGFPS…LLFEVANQLE (171 aa)). Residues 165 to 172 (GFPSVGKS), 190 to 194 (FTTLV), 212 to 215 (DLPG), 282 to 285 (NKMD), and 310 to 312 (SAV) each bind GTP. Mg(2+) is bound by residues Ser-172 and Thr-192. The OCT domain occupies 350–428 (TMENEEVPFN…LLEFEFEFID (79 aa)).

This sequence belongs to the TRAFAC class OBG-HflX-like GTPase superfamily. OBG GTPase family. As to quaternary structure, monomer. Interacts with TasA (AC P54507) in pull-down experiments. The cofactor is Mg(2+).

It is found in the cytoplasm. Its activity is regulated as follows. Inhibited by GDP; less than 20 uM ppGpp stimulates the GTPase, while higher concentrations inhibit. Its function is as follows. Necessary for the transition from vegetative growth to stage 0 or stage II of sporulation, but sporulation subsequent to these stages is unaffected at 45 degrees Celsius. This ts effect is probably due solely to the E-79 mutation. Required for expression of early sporulation genes, further suggesting a role in the induction of sporulation. Depletion effects on sporulation can be partially suppressed by missense mutations in spo0A. Strains depleted for obg stop growing after about 3 hours and do not induce the sigma-B factor following ethanol stress. It cofractionates with the ribosome and upstream stress response regulators RsbR, RsbS and RsbT in size fractionation columns, suggesting the ribosome might serve as a possible mediator of the activity of obg and the stress induction of sigma-B. In glycerol gradients partially associates with ribosomes; this is stabilized by a nonhydrolyzable GTP-analog and to a lesser extent GTP and GDP. Functionally, an essential GTPase which binds GTP, GDP and possibly (p)ppGpp with moderate affinity, with high nucleotide exchange rates and a fairly low GTP hydrolysis rate. Plays a role in control of the cell cycle, stress response, ribosome biogenesis and in those bacteria that undergo differentiation, in morphogenesis control. The polypeptide is GTPase Obg (Bacillus subtilis (strain 168)).